The following is a 171-amino-acid chain: MEKTTTQELLAQAEKICAQRNVRLTPQRLEVLRLMSLQDGAISAYDLLDLLREAEPQAKPPTVYRALDFLLEQGFVHKVESTNSYVLCHLFDQPTHTSAMFICDRCGAVKEECAEGVEDIMHTLAAKMGFALRHNVIEAHGLCAACVEVEACRHPEQCQHDHSVQVKKKPR.

This sequence belongs to the Fur family.

In terms of biological role, acts as a negative controlling element, employing Zn(2+) as a cofactor to bind the operator of the repressed genes (znuACB). This Escherichia coli (strain K12) protein is Zinc uptake regulation protein (zur).